A 364-amino-acid chain; its full sequence is Apyrase (364 aa).

The N-terminal stretch at 1–35 (MRSSYRVGNPIRFQPTNVVGLLLLSLVLSFMLVQS) is a signal peptide.

This sequence belongs to the apyrase family. It depends on Ca(2+) as a cofactor. In terms of tissue distribution, salivary gland (at protein level).

It localises to the secreted. The catalysed reaction is a ribonucleoside 5'-triphosphate + 2 H2O = a ribonucleoside 5'-phosphate + 2 phosphate + 2 H(+). Functionally, facilitates hematophagy by inhibiting ADP-dependent platelet aggregation in the host. Cleaves adenosine triphosphate (ATP) and adenosine diphosphate (ADP) to adenosine monophosphate (AMP) and inorganic phosphate in calcium-dependent manner. The chain is Apyrase from Cimex lectularius (Bed bug).